Here is an 839-residue protein sequence, read N- to C-terminus: Protein translocase subunit SecA (839 aa).

ATP contacts are provided by residues Gln-85, 103–107 (GEGKT), and Asp-493. Residues 780-790 (QIHEQERERAS) show a composition bias toward basic and acidic residues. Residues 780-839 (QIHEQERERASQRATTAAPQNIQSQQSANTDDLPKVERNEACPCGSGKKFKNCHGRKSFS) form a disordered region. A compositionally biased stretch (polar residues) spans 791-809 (QRATTAAPQNIQSQQSANT). Cys-821, Cys-823, Cys-832, and His-833 together coordinate Zn(2+). Residues 827 to 839 (KKFKNCHGRKSFS) show a composition bias toward basic residues.

Belongs to the SecA family. As to quaternary structure, monomer and homodimer. Part of the essential Sec protein translocation apparatus which comprises SecA, SecYEG and auxiliary proteins SecDF. Other proteins may also be involved. The cofactor is Zn(2+).

It localises to the cell membrane. Its subcellular location is the cytoplasm. The catalysed reaction is ATP + H2O + cellular proteinSide 1 = ADP + phosphate + cellular proteinSide 2.. In terms of biological role, part of the Sec protein translocase complex. Interacts with the SecYEG preprotein conducting channel. Has a central role in coupling the hydrolysis of ATP to the transfer of proteins into and across the cell membrane, serving as an ATP-driven molecular motor driving the stepwise translocation of polypeptide chains across the membrane. The polypeptide is Protein translocase subunit SecA (Streptococcus pyogenes serotype M28 (strain MGAS6180)).